A 571-amino-acid polypeptide reads, in one-letter code: MTLNGWTQITLYGAVVLALVKPLGWYMTRVFTGERTLLSPVLAPIERGLYRAAGIDARQEQTWLGYAGALLLFHVFGFLVLYAILRLQAALPLNPADQAAVAPDLAFNTSASFITNTNWQNYGGESTLSYLSQMLGLTHQNFLSAATGIAVAVALIRGFARASTRTLGSFWVDLTRAILYVLLPICILYTLFLVWQGIPQTLGAYIDATTLEGGKQTIALGPVASQVAIKMLGTNGGGFFNANAAHPFENPTALSNFVQMVSIFAIGAALTNVFGRMVGDERQGWAILAAMGALFLAGVAVAYWAEANGSPVLASFGLSGGNLEGKEVRFDIAASALFAVVTTAASCGAVNAMHDSFTALGGMIPLVNMQLGEVIIGGVGAGLYGMLIFVVVAIFVAGLMVGRTPEYLGKKIETKEVKMAMLGILCLPLMMLGFTALATVLPTGLAGPANAGPHGFSEILYAYTSAAANNGSAFAGLSGNTPFYNATLAVGMLVGRFFVIIPALAIAGALAAKKTVPASAGTFPTDGALFVGLLVGVILIIGGLTFFPALALGPVVEHLAGAAGQTFAMGD.

Transmembrane regions (helical) follow at residues 5–25 (GWTQ…PLGW), 64–84 (LGYA…LYAI), 136–156 (GLTH…VALI), 178–198 (ILYV…WQGI), 254–274 (LSNF…TNVF), 285–305 (WAIL…AYWA), 330–350 (FDIA…CGAV), 357–379 (FTAL…IGGV), 421–441 (MLGI…ATVL), 488–508 (LAVG…AIAG), and 527–547 (GALF…LTFF).

Belongs to the KdpA family. The system is composed of three essential subunits: KdpA, KdpB and KdpC.

It is found in the cell inner membrane. Part of the high-affinity ATP-driven potassium transport (or Kdp) system, which catalyzes the hydrolysis of ATP coupled with the electrogenic transport of potassium into the cytoplasm. This subunit binds the periplasmic potassium ions and delivers the ions to the membrane domain of KdpB through an intramembrane tunnel. The chain is Potassium-transporting ATPase potassium-binding subunit from Methylobacterium nodulans (strain LMG 21967 / CNCM I-2342 / ORS 2060).